The following is a 257-amino-acid chain: MKSNTEIYKNLKLLEDYGTYLIEWIKLKVQQANKKGVIVGISGGIDSALVACLAKKAFPENSLGITMPIGNSMKLDFDDIAKLQKLTKLEIINIDLTLSYDALAKTLDVKNKLAKANIKPRLRMASLYAMAQEKDYLVLGTDNLDEWYLGYFTKYGDGGVDLLPISYLTKSEVISLAQIYKVDKGIIEKKPSAGLWENQEDEKELGYSYSEVDLFLRKKQIDSQIATKIEKQHQMTEHKRQLASKPMDIVDFENKER.

Position 40–47 (40–47) interacts with ATP; sequence GISGGIDS. Mg(2+) is bound at residue Asp-46. Residue Arg-121 coordinates deamido-NAD(+). ATP is bound at residue Thr-141. Position 146 (Glu-146) interacts with Mg(2+). Deamido-NAD(+)-binding residues include Lys-154 and Asp-161. Positions 170 and 192 each coordinate ATP. Residue 238 to 239 participates in deamido-NAD(+) binding; sequence HK.

Belongs to the NAD synthetase family. As to quaternary structure, homodimer.

The enzyme catalyses deamido-NAD(+) + NH4(+) + ATP = AMP + diphosphate + NAD(+) + H(+). It functions in the pathway cofactor biosynthesis; NAD(+) biosynthesis; NAD(+) from deamido-NAD(+) (ammonia route): step 1/1. Catalyzes the ATP-dependent amidation of deamido-NAD to form NAD. Uses ammonia as a nitrogen source. In Mycoplasmopsis pulmonis (strain UAB CTIP) (Mycoplasma pulmonis), this protein is NH(3)-dependent NAD(+) synthetase.